The chain runs to 465 residues: Cysteine--tRNA ligase (465 aa).

Position 27 (Cys27) interacts with Zn(2+). Residues 29–39 (PTVYDDAHLGH) carry the 'HIGH' region motif. Cys207, His237, and Glu241 together coordinate Zn(2+). The 'KMSKS' region signature appears at 269 to 273 (KMSKS). Lys272 contacts ATP.

This sequence belongs to the class-I aminoacyl-tRNA synthetase family. Monomer. Requires Zn(2+) as cofactor.

The protein localises to the cytoplasm. The enzyme catalyses tRNA(Cys) + L-cysteine + ATP = L-cysteinyl-tRNA(Cys) + AMP + diphosphate. The sequence is that of Cysteine--tRNA ligase from Nitratiruptor sp. (strain SB155-2).